A 506-amino-acid polypeptide reads, in one-letter code: DNA nucleotidylexotransferase (506 aa).

The Nuclear localization signal motif lies at 11-17 (SQRKRQK). The region spanning 27–124 (GYEIKFNKLV…RPVDLEKKYH (98 aa)) is the BRCT domain. Positions 258–262 (VGVKT) are involved in DNA binding. Residues 333–338 (GFRRGK) and 342–345 (HDID) each bind a 2'-deoxyribonucleoside 5'-triphosphate. Asp343, Asp345, and Asp430 together coordinate Mg(2+). 445–446 (GW) provides a ligand contact to a 2'-deoxyribonucleoside 5'-triphosphate.

This sequence belongs to the DNA polymerase type-X family. Mg(2+) serves as cofactor.

The protein resides in the nucleus. The catalysed reaction is DNA(n) + a 2'-deoxyribonucleoside 5'-triphosphate = DNA(n+1) + diphosphate. In terms of biological role, template-independent DNA polymerase which catalyzes the random addition of deoxynucleoside 5'-triphosphate to the 3'-end of a DNA initiator. One of the in vivo functions of this enzyme is the addition of nucleotides at the junction (N region) of rearranged Ig heavy chain and T-cell receptor gene segments during the maturation of B- and T-cells. The chain is DNA nucleotidylexotransferase (DNTT) from Gallus gallus (Chicken).